The primary structure comprises 212 residues: Regulatory protein RecX (212 aa).

The protein belongs to the RecX family.

Its subcellular location is the cytoplasm. Modulates RecA activity. This chain is Regulatory protein RecX, found in Clostridium botulinum (strain Alaska E43 / Type E3).